The chain runs to 296 residues: Diguanylate cyclase DgcS (296 aa).

The GGDEF domain occupies 165 to 293 (GSVSLIVLDL…GRNCYKLSPT (129 aa)). 3 residues coordinate Mg(2+): D173, L174, and D216. D216 is a catalytic residue.

Mg(2+) serves as cofactor.

The catalysed reaction is 2 GTP = 3',3'-c-di-GMP + 2 diphosphate. In terms of biological role, catalyzes the synthesis of cyclic-di-GMP (c-di-GMP) via the condensation of 2 GTP molecules. May be involved in the regulation of formation of solid surface-associated biofilms and pellicles according to environmental conditions. This chain is Diguanylate cyclase DgcS, found in Shewanella oneidensis (strain ATCC 700550 / JCM 31522 / CIP 106686 / LMG 19005 / NCIMB 14063 / MR-1).